Here is a 362-residue protein sequence, read N- to C-terminus: Probable RNA methyltransferase Tbd_1951 (362 aa).

Catalysis depends on Glu-89, which acts as the Proton acceptor. Positions 92–318 (LLPRDGVCVS…AKLRHSAGQD (227 aa)) constitute a Radical SAM core domain. A disulfide bridge connects residues Cys-99 and Cys-323. The [4Fe-4S] cluster site is built by Cys-106, Cys-110, and Cys-113. S-adenosyl-L-methionine is bound by residues 151 to 152 (GE), Ser-181, 204 to 206 (SLH), and Asn-280. Cys-323 (S-methylcysteine intermediate) is an active-site residue. The disordered stretch occupies residues 342-362 (LPSAETPAASPKAAASIGFPG). Positions 343 to 362 (PSAETPAASPKAAASIGFPG) are enriched in low complexity.

The protein belongs to the radical SAM superfamily. RlmN family. [4Fe-4S] cluster is required as a cofactor.

The protein resides in the cytoplasm. The chain is Probable RNA methyltransferase Tbd_1951 from Thiobacillus denitrificans (strain ATCC 25259 / T1).